The primary structure comprises 111 residues: uncharacterized protein (111 aa).

Positions 66-94 (PVPTATPSLPRSGFTSSAKKIKESRKQKS) are disordered. Polar residues predominate over residues 70-83 (ATPSLPRSGFTSSA).

The protein resides in the plastid. It localises to the chloroplast. This is an uncharacterized protein from Chlamydomonas reinhardtii (Chlamydomonas smithii).